A 376-amino-acid polypeptide reads, in one-letter code: GTPase Obg (376 aa).

Residues 1–158 form the Obg domain; the sequence is MFIDSVNLTL…RDVRLELKLI (158 aa). The 201-residue stretch at 159 to 359 folds into the OBG-type G domain; the sequence is ADVGLVGFPN…LKFSLLELLK (201 aa). GTP-binding positions include 165-172, 190-194, 212-215, 280-283, and 340-342; these read GFPNVGKS, FTTLT, DIPG, TRMD, and SSA. Mg(2+) contacts are provided by S172 and T192.

The protein belongs to the TRAFAC class OBG-HflX-like GTPase superfamily. OBG GTPase family. In terms of assembly, monomer. Mg(2+) serves as cofactor.

The protein resides in the cytoplasm. In terms of biological role, an essential GTPase which binds GTP, GDP and possibly (p)ppGpp with moderate affinity, with high nucleotide exchange rates and a fairly low GTP hydrolysis rate. Plays a role in control of the cell cycle, stress response, ribosome biogenesis and in those bacteria that undergo differentiation, in morphogenesis control. This Campylobacter curvus (strain 525.92) protein is GTPase Obg.